We begin with the raw amino-acid sequence, 121 residues long: UPF0145 protein SAV_4658 (121 aa).

This sequence belongs to the UPF0145 family.

The chain is UPF0145 protein SAV_4658 from Streptomyces avermitilis (strain ATCC 31267 / DSM 46492 / JCM 5070 / NBRC 14893 / NCIMB 12804 / NRRL 8165 / MA-4680).